We begin with the raw amino-acid sequence, 501 residues long: DEAD-box ATP-dependent RNA helicase 20 (501 aa).

2 stretches are compositionally biased toward basic and acidic residues: residues 1 to 20 (MSRYDSRTGDSTSYRDRRSD) and 38 to 53 (SKKDNDGNESPRKLDL). A disordered region spans residues 1–53 (MSRYDSRTGDSTSYRDRRSDSGFGGTSSYGSSGSHTSSKKDNDGNESPRKLDL). The Q motif signature appears at 99–127 (KSFRDVGFPDYVLEEVKKAGFTEPTPIQS). Residues 130–305 (WPMAMKGRDL…KKFLYNPYKV (176 aa)) form the Helicase ATP-binding domain. 143 to 150 (AETGSGKT) lines the ATP pocket. The DEAD box motif lies at 253-256 (DEAD). The Helicase C-terminal domain maps to 333 to 478 (KLVKLLEDIM…KVSPELASMG (146 aa)). Residues 473–501 (ELASMGRSTAPPPPGLGGFRDRGSRRGWS) are disordered. The span at 491-501 (FRDRGSRRGWS) shows a compositional bias: basic and acidic residues.

It belongs to the DEAD box helicase family. DDX5/DBP2 subfamily.

It localises to the nucleus. The enzyme catalyses ATP + H2O = ADP + phosphate + H(+). In terms of biological role, ATP-dependent RNA helicase involved nonsense-mediated mRNA decay and ribosome biogenesis through rRNA processing. The polypeptide is DEAD-box ATP-dependent RNA helicase 20 (RH20) (Arabidopsis thaliana (Mouse-ear cress)).